The primary structure comprises 159 residues: uncharacterized protein (159 aa).

In terms of domain architecture, N-acetyltransferase spans 1–139 (MNIIPTCQVP…TARKMKPEIP (139 aa)).

This is an uncharacterized protein from Bacillus subtilis (strain 168).